A 358-amino-acid chain; its full sequence is Glutamate 5-kinase (358 aa).

Lys9 lines the ATP pocket. Residues Ser49, Asp136, and Asn148 each contribute to the substrate site. ATP is bound by residues 168-169 and 210-216; these read TD and TGGMTTK. Positions 275–353 constitute a PUA domain; it reads DAAVEVDAGA…RAEGVLIHRN (79 aa).

Belongs to the glutamate 5-kinase family.

The protein resides in the cytoplasm. The enzyme catalyses L-glutamate + ATP = L-glutamyl 5-phosphate + ADP. The protein operates within amino-acid biosynthesis; L-proline biosynthesis; L-glutamate 5-semialdehyde from L-glutamate: step 1/2. Its function is as follows. Catalyzes the transfer of a phosphate group to glutamate to form L-glutamate 5-phosphate. The protein is Glutamate 5-kinase of Streptococcus suis (strain 05ZYH33).